Reading from the N-terminus, the 593-residue chain is Sodium-independent sulfate anion transporter (593 aa).

Over 1-34 (MAPDTCCCSATALRRRLPVLAWVPDYSLQWLRLD) the chain is Extracellular. Residues 35–55 (FIAGLSVGLTVIPQALAYAEV) form a helical membrane-spanning segment. Residue Ala-56 is a topological domain, cytoplasmic. Residues 57-77 (GLPPQYGLYSAFMGCFVYFFL) form a helical membrane-spanning segment. The Extracellular portion of the chain corresponds to 78-82 (GTSRD). A helical transmembrane segment spans residues 83-100 (VTLGPTAIMSLLVSFYTF). Over 101–106 (REPAYA) the chain is Cytoplasmic. The chain crosses the membrane as a helical span at residues 107 to 127 (VLLAFLSGCIQLAMGLLHLGF). Topologically, residues 128–176 (LLDFISCPVIKGFTSAASITIGFGQIKNLLGLQKIPRQFFLQVYHTFLH) are extracellular. The chain crosses the membrane as a helical span at residues 177–197 (IGETRVGDAVLGLASMLLLLV). Over 198 to 233 (LKCMREHMPPPHPEMPLAVKFSRGLVWTVTTARNAL) the chain is Cytoplasmic. A helical membrane pass occupies residues 234-254 (VVSSAALIAYAFEVTGSHPFV). Residues 255-287 (LTGKIAEGLPPVRIPPFSVTRDNKTISFSEMVQ) lie on the Extracellular side of the membrane. A helical transmembrane segment spans residues 288-308 (DMGAGLAVVPLMGLLESIAVA). At 309–324 (KSFASQNNYRIDANQE) the chain is on the cytoplasmic side. Residues 325-345 (LLAIGLTNVLGSLVSSYPVTG) form a helical membrane-spanning segment. The Extracellular segment spans residues 346 to 361 (SFGRTAVNAQTGVCTP). Residues 362-382 (AGGLVTGALVLLSLNYLTSLF) form a helical membrane-spanning segment. A topological domain (cytoplasmic) is located at residue Ser-383. The chain crosses the membrane as a helical span at residues 384 to 404 (YIPKSALAAVIITAVTPLFDV). The Extracellular portion of the chain corresponds to 405–417 (KIFRSLWRVQRLD). A helical transmembrane segment spans residues 418–438 (LLPLCVTFLLSFWEIQYGILA). Residues 439 to 593 (GSLVSLLILL…SSLLKSPSGP (155 aa)) are Cytoplasmic-facing. In terms of domain architecture, STAS spans 453-566 (RPKTQVSEGQ…EEAEKFLQQE (114 aa)). The tract at residues 564–593 (QQEPGTEPNSIHEDAVPEQRSSLLKSPSGP) is disordered. Positions 582–593 (QRSSLLKSPSGP) are enriched in polar residues.

Belongs to the SLC26A/SulP transporter (TC 2.A.53) family. Abundantly expressed in the cerebellum, with a predominant expression in Purkinje cells (at protein level). In terms of tissue distribution, predominantly expressed in the kidney and brain. In the kidney localizes in collecting duct intercalated cells (at protein level). As to expression, predominantly expressed in the brain with lower levels in the kidney.

The protein localises to the cell membrane. It localises to the lysosome membrane. The protein resides in the apical cell membrane. Its subcellular location is the basolateral cell membrane. It carries out the reaction hydrogencarbonate(in) + chloride(out) = hydrogencarbonate(out) + chloride(in). The catalysed reaction is sulfate(in) + H(+)(in) = sulfate(out) + H(+)(out). It catalyses the reaction oxalate(in) + chloride(out) = oxalate(out) + chloride(in). Functionally, sodium-independent anion exchanger mediating bicarbonate, chloride, sulfate and oxalate transport. Exhibits sodium-independent sulfate anion transporter activity that may cooperate with SLC26A2 to mediate DIDS-sensitive sulfate uptake into high endothelial venules endothelial cells (HEVEC). In the kidney, mediates chloride-bicarbonate exchange, facilitating V-ATPase-mediated acid secretion. May function as a chloride channel, playing an important role in moderating chloride homeostasis and neuronal activity in the cerebellum. In Mus musculus (Mouse), this protein is Sodium-independent sulfate anion transporter.